The chain runs to 174 residues: Adenylate kinase (174 aa).

Positions serine 12–valine 41 are NMP. Residues threonine 13, arginine 18, glycine 39 to valine 41, glycine 67 to arginine 70, and glutamine 74 each bind AMP. The tract at residues glycine 104–aspartate 141 is LID. ATP-binding positions include arginine 105 and threonine 114–tyrosine 115. AMP is bound by residues arginine 138 and arginine 149.

The protein belongs to the adenylate kinase family. As to quaternary structure, monomer.

Its subcellular location is the cytoplasm. It catalyses the reaction AMP + ATP = 2 ADP. Its pathway is purine metabolism; AMP biosynthesis via salvage pathway; AMP from ADP: step 1/1. Catalyzes the reversible transfer of the terminal phosphate group between ATP and AMP. Plays an important role in cellular energy homeostasis and in adenine nucleotide metabolism. This is Adenylate kinase from Neisseria polysaccharea.